The following is a 120-amino-acid chain: Host cell factor C1 regulator 1 (120 aa).

Positions 1–30 (MILQQPLERGPPSRDPRATTGVTRGLNASL) are disordered. Polar residues predominate over residues 20-30 (TGVTRGLNASL). The interaction with HCFC1 stretch occupies residues 58 to 61 (DHPY). Positions 92 to 101 (IPEALRLLRL) match the Nuclear export signal motif.

As to quaternary structure, interacts with HCFC1.

It is found in the cytoplasm. The protein localises to the nucleus. Functionally, regulates HCFC1 activity by modulating its subcellular localization. Overexpression of HCFC1R1 leads to accumulation of HCFC1 in the cytoplasm. HCFC1R1-mediated export may provide the pool of cytoplasmic HCFC1 required for import of virion-derived VP16 into the nucleus. This is Host cell factor C1 regulator 1 (Hcfc1r1) from Mus musculus (Mouse).